Here is a 179-residue protein sequence, read N- to C-terminus: Large ribosomal subunit protein uL5 (179 aa).

Belongs to the universal ribosomal protein uL5 family. As to quaternary structure, part of the 50S ribosomal subunit; part of the 5S rRNA/L5/L18/L25 subcomplex. Contacts the 5S rRNA and the P site tRNA. Forms a bridge to the 30S subunit in the 70S ribosome.

Its function is as follows. This is one of the proteins that bind and probably mediate the attachment of the 5S RNA into the large ribosomal subunit, where it forms part of the central protuberance. In the 70S ribosome it contacts protein S13 of the 30S subunit (bridge B1b), connecting the 2 subunits; this bridge is implicated in subunit movement. Contacts the P site tRNA; the 5S rRNA and some of its associated proteins might help stabilize positioning of ribosome-bound tRNAs. In Staphylococcus haemolyticus (strain JCSC1435), this protein is Large ribosomal subunit protein uL5.